Reading from the N-terminus, the 503-residue chain is GMP synthase [glutamine-hydrolyzing] (503 aa).

The 187-residue stretch at 3-189 (PVLVVDFGSQ…AFLSSFAAPN (187 aa)) folds into the Glutamine amidotransferase type-1 domain. The active-site Nucleophile is the Cys-80. Catalysis depends on residues His-165 and Glu-167. Residues 190–380 (WDPEQTICGT…LGIPKHIVHR (191 aa)) form the GMPS ATP-PPase domain. 217 to 223 (SGGVDSV) is an ATP binding site.

Homodimer.

The catalysed reaction is XMP + L-glutamine + ATP + H2O = GMP + L-glutamate + AMP + diphosphate + 2 H(+). The protein operates within purine metabolism; GMP biosynthesis; GMP from XMP (L-Gln route): step 1/1. Its function is as follows. Catalyzes the synthesis of GMP from XMP. The protein is GMP synthase [glutamine-hydrolyzing] of Tropheryma whipplei (strain Twist) (Whipple's bacillus).